We begin with the raw amino-acid sequence, 344 residues long: N-acetyl-gamma-glutamyl-phosphate reductase (344 aa).

Cys148 is an active-site residue.

The protein belongs to the NAGSA dehydrogenase family. Type 1 subfamily.

It is found in the cytoplasm. It carries out the reaction N-acetyl-L-glutamate 5-semialdehyde + phosphate + NADP(+) = N-acetyl-L-glutamyl 5-phosphate + NADPH + H(+). It participates in amino-acid biosynthesis; L-arginine biosynthesis; N(2)-acetyl-L-ornithine from L-glutamate: step 3/4. Functionally, catalyzes the NADPH-dependent reduction of N-acetyl-5-glutamyl phosphate to yield N-acetyl-L-glutamate 5-semialdehyde. The polypeptide is N-acetyl-gamma-glutamyl-phosphate reductase (Geobacillus thermodenitrificans (strain NG80-2)).